A 118-amino-acid chain; its full sequence is Transmembrane protein 243 (118 aa).

Met-1 is modified (N-acetylmethionine). A run of 3 helical transmembrane segments spans residues 32–52, 62–82, and 94–114; these read LVVGSLTSLLILVTLISAFVF, IFFAVCISLSSITACILIYWY, and LIYYIIFSIIMLCICANLYFH.

Belongs to the TMEM243 family. Widely expressed.

Its subcellular location is the membrane. The polypeptide is Transmembrane protein 243 (TMEM243) (Homo sapiens (Human)).